The primary structure comprises 50 residues: Large ribosomal subunit protein bL33 (50 aa).

This sequence belongs to the bacterial ribosomal protein bL33 family.

This Hydrogenovibrio crunogenus (strain DSM 25203 / XCL-2) (Thiomicrospira crunogena) protein is Large ribosomal subunit protein bL33.